A 459-amino-acid chain; its full sequence is E3 ubiquitin-protein ligase RNF25 (459 aa).

The RWD domain maps to 18–128 (SEVEVLESIY…EKGKEILTDN (111 aa)). The Zn(2+) site is built by cysteine 135, cysteine 138, cysteine 153, histidine 155, histidine 158, cysteine 161, cysteine 198, and cysteine 201. Residues 135–202 (CVICLYGFQE…AVGVQCPVCR (68 aa)) form an RING-type zinc finger. 2 disordered regions span residues 268–309 (PPAP…PPLP) and 322–459 (TRSN…KDGS). Over residues 282-303 (KGSQPPSTLAAELSTSPAVQST) the composition is skewed to polar residues. Basic and acidic residues-rich tracts occupy residues 349–370 (QPER…RDTQ), 378–389 (PLKEPMDLKPEP), 413–424 (RTRDCVRWERSK), and 446–459 (TRRE…KDGS). Serine 450 is modified (phosphoserine).

It belongs to the RNF25 family. Interacts with UBE2D2, and may also interact with UBE2E1 and UBE2E3. Interacts with RELA/p65. Post-translationally, ubiquitinated; autoubiquitinated.

It is found in the cytoplasm. The enzyme catalyses S-ubiquitinyl-[E2 ubiquitin-conjugating enzyme]-L-cysteine + [acceptor protein]-L-lysine = [E2 ubiquitin-conjugating enzyme]-L-cysteine + N(6)-ubiquitinyl-[acceptor protein]-L-lysine.. It functions in the pathway protein modification; protein ubiquitination. Functionally, E3 ubiquitin-protein ligase that plays a key role in the RNF14-RNF25 translation quality control pathway, a pathway that takes place when a ribosome has stalled during translation, and which promotes ubiquitination and degradation of translation factors on stalled ribosomes. Catalyzes ubiquitination of RPS27A in response to ribosome collisions, promoting activation of RNF14. RNF25 catalyzes ubiquitination of other ribosomal proteins on stalled ribosomes, such as RPL0, RPL1, RPL12, RPS13 and RPS17. Also involved in ubiquitination and degradation of stalled ETF1/eRF1. Independently of its function in the response to stalled ribosomes, mediates ubiquitination and subsequent proteasomal degradation of NKD2. May also stimulate transcription mediated by NF-kappa-B via its interaction with RELA/p65. This is E3 ubiquitin-protein ligase RNF25 from Homo sapiens (Human).